Consider the following 314-residue polypeptide: WD repeat-containing protein 38 (314 aa).

WD repeat units lie at residues 19–58 (QHGGEVNSSAFSPDGQMLLTGSEDGCVYGWETRSGQLLWR), 61–100 (GHTGPVKFCRFSPDGHLFASASCDCTVRLWDVARAKCLRV), 103–142 (GHQRSVETVSFSPDSRQLASGGWDKRVMLWDVQSGQMLRL), 145–184 (GHRDSIQSSDFSPTVNCLATGSWDSTVHIWDLRMVTPAVS), 190–228 (GHSANISCLCYSASGLLASGSWDKTIHIWKPTTSSLLIQ), 231–272 (GHVT…ETLK), and 274–312 (VLDVAHTCAFTPDGKILVSGAADQTRRQISRTSKSPRDP). A disordered region spans residues 294-314 (AADQTRRQISRTSKSPRDPQT).

This chain is WD repeat-containing protein 38 (WDR38), found in Homo sapiens (Human).